Reading from the N-terminus, the 127-residue chain is Small ribosomal subunit protein eS8 (127 aa).

The interval 1-31 (MTIFQGKSGKKATGGSLKQSRKKRRFELGRE) is disordered.

It belongs to the eukaryotic ribosomal protein eS8 family. Part of the 30S ribosomal subunit.

This Thermoplasma acidophilum (strain ATCC 25905 / DSM 1728 / JCM 9062 / NBRC 15155 / AMRC-C165) protein is Small ribosomal subunit protein eS8 (rps8e).